Reading from the N-terminus, the 538-residue chain is CWF19-like protein 1 (538 aa).

Disordered regions lie at residues 259-278 (PDVT…TGKQ) and 298-324 (QGRK…PPQP).

The protein belongs to the CWF19 family.

The protein is CWF19-like protein 1 (CWF19L1) of Pongo abelii (Sumatran orangutan).